A 570-amino-acid chain; its full sequence is Sulfite reductase [NADPH] hemoprotein beta-component (570 aa).

[4Fe-4S] cluster is bound by residues Cys-434, Cys-440, Cys-479, and Cys-483. Cys-483 serves as a coordination point for siroheme.

Belongs to the nitrite and sulfite reductase 4Fe-4S domain family. In terms of assembly, alpha(8)-beta(8). The alpha component is a flavoprotein, the beta component is a hemoprotein. It depends on siroheme as a cofactor. [4Fe-4S] cluster is required as a cofactor.

The catalysed reaction is hydrogen sulfide + 3 NADP(+) + 3 H2O = sulfite + 3 NADPH + 4 H(+). It participates in sulfur metabolism; hydrogen sulfide biosynthesis; hydrogen sulfide from sulfite (NADPH route): step 1/1. Functionally, component of the sulfite reductase complex that catalyzes the 6-electron reduction of sulfite to sulfide. This is one of several activities required for the biosynthesis of L-cysteine from sulfate. The protein is Sulfite reductase [NADPH] hemoprotein beta-component of Salmonella gallinarum (strain 287/91 / NCTC 13346).